The following is a 160-amino-acid chain: S-adenosylmethionine decarboxylase proenzyme (160 aa).

The Schiff-base intermediate with substrate; via pyruvic acid role is filled by Ser-73. Position 73 is a pyruvic acid (Ser); by autocatalysis (Ser-73). Catalysis depends on His-78, which acts as the Proton acceptor; for processing activity. Cys-93 acts as the Proton donor; for catalytic activity in catalysis.

It belongs to the prokaryotic AdoMetDC family. Type 1 subfamily. Heterotetramer of two alpha and two beta chains arranged as a dimer of alpha/beta heterodimers. Pyruvate is required as a cofactor. In terms of processing, is synthesized initially as an inactive proenzyme. Formation of the active enzyme involves a self-maturation process in which the active site pyruvoyl group is generated from an internal serine residue via an autocatalytic post-translational modification. Two non-identical subunits are generated from the proenzyme in this reaction, and the pyruvate is formed at the N-terminus of the alpha chain, which is derived from the carboxyl end of the proenzyme. The post-translation cleavage follows an unusual pathway, termed non-hydrolytic serinolysis, in which the side chain hydroxyl group of the serine supplies its oxygen atom to form the C-terminus of the beta chain, while the remainder of the serine residue undergoes an oxidative deamination to produce ammonia and the pyruvoyl group blocking the N-terminus of the alpha chain.

The enzyme catalyses S-adenosyl-L-methionine + H(+) = S-adenosyl 3-(methylsulfanyl)propylamine + CO2. It functions in the pathway amine and polyamine biosynthesis; S-adenosylmethioninamine biosynthesis; S-adenosylmethioninamine from S-adenosyl-L-methionine: step 1/1. Its function is as follows. Catalyzes the decarboxylation of S-adenosylmethionine to S-adenosylmethioninamine (dcAdoMet), the propylamine donor required for the synthesis of the polyamines spermine and spermidine from the diamine putrescine. In Pseudomonas paraeruginosa (strain DSM 24068 / PA7) (Pseudomonas aeruginosa (strain PA7)), this protein is S-adenosylmethionine decarboxylase proenzyme.